A 687-amino-acid chain; its full sequence is RNA-binding protein VTS1 (687 aa).

Over residues 1–10 the composition is skewed to basic residues; sequence MASHTLRPHR. 3 disordered regions span residues 1 to 115, 248 to 341, and 526 to 598; these read MASH…TPEA, AAAK…PGIG, and SPFN…AGVA. A compositionally biased stretch (polar residues) spans 29–41; it reads TRQSLGPPTSGNS. A compositionally biased stretch (low complexity) spans 52–68; the sequence is GLASPSSPSQPRHVSSS. Residues 287–301 are compositionally biased toward polar residues; the sequence is GLESNMSGRSRSKSP. The span at 305–324 shows a compositional bias: basic and acidic residues; sequence PRPKSTDFSGKPRESLRRES. Polar residues predominate over residues 526-539; that stretch reads SPFNASAPSLQPGL. Low complexity predominate over residues 550–566; the sequence is QSSHLNQHYNQHQQQHQ. Residues 585-597 are compositionally biased toward gly residues; the sequence is QTGGGGAGGGAGV. Residues 606–667 form the SAM domain; it reads KVLEDVPNWL…LKVFYNVRTK (62 aa).

It belongs to the VTS1 family. In terms of assembly, monomer. Binds to RNA.

It is found in the cytoplasm. The protein localises to the cytosol. It localises to the P-body. In terms of biological role, RNA-binding protein involved in post-transcriptional regulation through transcript degradation. In Cryptococcus neoformans var. grubii serotype A (strain H99 / ATCC 208821 / CBS 10515 / FGSC 9487) (Filobasidiella neoformans var. grubii), this protein is RNA-binding protein VTS1.